The sequence spans 460 residues: tRNA modification GTPase MnmE (460 aa).

The (6S)-5-formyl-5,6,7,8-tetrahydrofolate site is built by R22, E87, and R126. The 160-residue stretch at 222–381 folds into the TrmE-type G domain; it reads GLKTAIIGKP…LENTIYNLVF (160 aa). Residue N232 coordinates K(+). Residues 232-237, 251-257, and 276-279 contribute to the GTP site; these read NVGKSS, TDIPGTT, and DTAG. S236 is a binding site for Mg(2+). Residues T251, I253, and T256 each coordinate K(+). Residue T257 participates in Mg(2+) binding. K460 is a (6S)-5-formyl-5,6,7,8-tetrahydrofolate binding site.

This sequence belongs to the TRAFAC class TrmE-Era-EngA-EngB-Septin-like GTPase superfamily. TrmE GTPase family. As to quaternary structure, homodimer. Heterotetramer of two MnmE and two MnmG subunits. K(+) is required as a cofactor.

It localises to the cytoplasm. Functionally, exhibits a very high intrinsic GTPase hydrolysis rate. Involved in the addition of a carboxymethylaminomethyl (cmnm) group at the wobble position (U34) of certain tRNAs, forming tRNA-cmnm(5)s(2)U34. This is tRNA modification GTPase MnmE from Thermoanaerobacter sp. (strain X514).